The sequence spans 908 residues: Isoleucine--tRNA ligase (908 aa).

Residues P59–H69 carry the 'HIGH' region motif. L-isoleucyl-5'-AMP is bound at residue E554. The short motif at K595–S599 is the 'KMSKS' region element. K598 provides a ligand contact to ATP. Residues C882, C885, C898, and C901 each contribute to the Zn(2+) site.

This sequence belongs to the class-I aminoacyl-tRNA synthetase family. IleS type 1 subfamily. In terms of assembly, monomer. It depends on Zn(2+) as a cofactor.

It localises to the cytoplasm. It carries out the reaction tRNA(Ile) + L-isoleucine + ATP = L-isoleucyl-tRNA(Ile) + AMP + diphosphate. In terms of biological role, catalyzes the attachment of isoleucine to tRNA(Ile). As IleRS can inadvertently accommodate and process structurally similar amino acids such as valine, to avoid such errors it has two additional distinct tRNA(Ile)-dependent editing activities. One activity is designated as 'pretransfer' editing and involves the hydrolysis of activated Val-AMP. The other activity is designated 'posttransfer' editing and involves deacylation of mischarged Val-tRNA(Ile). This Mesoplasma florum (strain ATCC 33453 / NBRC 100688 / NCTC 11704 / L1) (Acholeplasma florum) protein is Isoleucine--tRNA ligase.